The sequence spans 601 residues: Kelch-like ECH-associated protein 1A (601 aa).

Residues 44-117 (MDELRHHEML…VISRLIDFAY (74 aa)) enclose the BTB domain. Positions 153–253 (KNLEPSNVIG…LNAVHIYALP (101 aa)) constitute a BACK domain. Kelch repeat units lie at residues 292–337 (PTPH…PCSG), 338–388 (LGAC…PRNR), 389–435 (VGVG…ARLG), 436–482 (AGVA…VRSG), 484–529 (GVVC…CRSA), and 530–576 (HGVS…GRSG).

It belongs to the KEAP1 family. In terms of assembly, homodimer and heterodimer; heterodimerizes with keap1b. Component of the BCR(KEAP1) E3 ubiquitin ligase complex, at least composed of 2 molecules of cul3, 2 molecules of keap1 (keap1a and/or keap1b), and rbx1. Interacts with nfe2l2/nrf2; the interaction is direct. Non-enzymatic covalent modifications of reactive cysteines by electrophile metabolites inactivate the BCR(KEAP1) complex. As to expression, widely expressed.

It is found in the cytoplasm. The protein resides in the nucleus. It functions in the pathway protein modification; protein ubiquitination. Its activity is regulated as follows. Ubiquitin ligase activity of the BCR(KEAP1) complex is inhibited by oxidative stress and electrophile metabolites such as sulforaphane. Electrophile metabolites react with reactive cysteine residues in keap1 and trigger non-enzymatic covalent modifications of these cysteine residues, leading to inactivate the ubiquitin ligase activity of the BCR(KEAP1) complex. Substrate-specific adapter of a BCR (BTB-CUL3-RBX1) E3 ubiquitin ligase complex that regulates the response to oxidative stress by targeting nfe2l2/nrf2 for ubiquitination. Keap1 acts as a key sensor of oxidative and electrophilic stress: in normal conditions, the BCR(KEAP1) complex mediates ubiquitination and degradation of nfe2l2/nrf2, a transcription factor regulating expression of many cytoprotective genes. In response to oxidative stress, different electrophile metabolites trigger non-enzymatic covalent modifications of highly reactive cysteine residues in KEAP1, leading to inactivate the ubiquitin ligase activity of the BCR(KEAP1) complex, promoting nfe2l2/nrf2 nuclear accumulation and expression of phase II detoxifying enzymes. This chain is Kelch-like ECH-associated protein 1A, found in Danio rerio (Zebrafish).